The chain runs to 365 residues: Putrescine carbamoyltransferase (365 aa).

Residues 54 to 58 (STRTR), R105, and H132 contribute to the carbamoyl phosphate site. Putrescine is bound at residue 277 to 280 (HCLP).

This sequence belongs to the aspartate/ornithine carbamoyltransferase superfamily. PTCase family. Homotrimer.

Its subcellular location is the cytoplasm. It catalyses the reaction carbamoyl phosphate + putrescine = N-carbamoylputrescine + phosphate + H(+). The protein operates within amine and polyamine biosynthesis; putrescine biosynthesis via agmatine pathway; putrescine from N-carbamoylputrescine (transferase route): step 1/1. Catalyzes the phosphorolysis of N-carbamoylputrescine to form carbamoyl phosphate and putrescine. Is involved in the degradation pathway of the polyamine agmatine. This chain is Putrescine carbamoyltransferase, found in Mycoplasma capricolum subsp. capricolum (strain California kid / ATCC 27343 / NCTC 10154).